We begin with the raw amino-acid sequence, 301 residues long: Protease HtpX (301 aa).

2 helical membrane-spanning segments follow: residues 4 to 24 and 38 to 58; these read IGLF…ILSL and LGNL…ISLL. A Zn(2+)-binding site is contributed by histidine 147. Glutamate 148 is a catalytic residue. Histidine 151 lines the Zn(2+) pocket. 2 consecutive transmembrane segments (helical) span residues 155 to 175 and 200 to 220; these read GDMV…MFFA and FAIT…IVMW. A Zn(2+)-binding site is contributed by glutamate 226.

The protein belongs to the peptidase M48B family. It depends on Zn(2+) as a cofactor.

The protein resides in the cell inner membrane. This Acinetobacter baylyi (strain ATCC 33305 / BD413 / ADP1) protein is Protease HtpX.